The sequence spans 367 residues: Leucine carboxyl methyltransferase 1 (367 aa).

S-adenosyl-L-methionine contacts are provided by residues Arg-84, Gly-109, Asp-132, 187-188 (DL), and Glu-212.

The protein belongs to the methyltransferase superfamily. LCMT family.

The catalysed reaction is [phosphatase 2A protein]-C-terminal L-leucine + S-adenosyl-L-methionine = [phosphatase 2A protein]-C-terminal L-leucine methyl ester + S-adenosyl-L-homocysteine. Functionally, methylates the carboxyl group of the C-terminal leucine residue of protein phosphatase 2A catalytic subunits to form alpha-leucine ester residues. The chain is Leucine carboxyl methyltransferase 1 (PPM1) from Candida albicans (strain SC5314 / ATCC MYA-2876) (Yeast).